Reading from the N-terminus, the 401-residue chain is Elongation factor Tu (401 aa).

The 202-residue stretch at 10–211 folds into the tr-type G domain; that stretch reads KPHLNIGTIG…AVDTYVPNPT (202 aa). Positions 19-26 are G1; that stretch reads GHVDHGKT. 19–26 is a binding site for GTP; sequence GHVDHGKT. Residue Thr-26 participates in Mg(2+) binding. Residues 62–66 form a G2 region; it reads GITIA. The G3 stretch occupies residues 83-86; it reads DCPG. GTP-binding positions include 83–87 and 138–141; these read DCPGH and NKAD. The interval 138-141 is G4; that stretch reads NKAD. The tract at residues 179-181 is G5; it reads SAL.

The protein belongs to the TRAFAC class translation factor GTPase superfamily. Classic translation factor GTPase family. EF-Tu/EF-1A subfamily. Monomer.

It is found in the cytoplasm. The enzyme catalyses GTP + H2O = GDP + phosphate + H(+). In terms of biological role, GTP hydrolase that promotes the GTP-dependent binding of aminoacyl-tRNA to the A-site of ribosomes during protein biosynthesis. The sequence is that of Elongation factor Tu from Leptospira biflexa serovar Patoc (strain Patoc 1 / Ames).